Consider the following 212-residue polypeptide: Pyridoxine/pyridoxamine 5'-phosphate oxidase (212 aa).

Residues 7–10 and Lys-66 contribute to the substrate site; that span reads RREY. FMN is bound by residues 61–66, 76–77, Arg-82, Lys-83, and Gln-105; these read RIVLLK and YT. Residues Tyr-123, Arg-127, and Ser-131 each contribute to the substrate site. FMN contacts are provided by residues 140 to 141 and Trp-185; that span reads QS. 191-193 serves as a coordination point for substrate; sequence RLH. Arg-195 serves as a coordination point for FMN.

Belongs to the pyridoxamine 5'-phosphate oxidase family. Homodimer. The cofactor is FMN.

It catalyses the reaction pyridoxamine 5'-phosphate + O2 + H2O = pyridoxal 5'-phosphate + H2O2 + NH4(+). The enzyme catalyses pyridoxine 5'-phosphate + O2 = pyridoxal 5'-phosphate + H2O2. Its pathway is cofactor metabolism; pyridoxal 5'-phosphate salvage; pyridoxal 5'-phosphate from pyridoxamine 5'-phosphate: step 1/1. The protein operates within cofactor metabolism; pyridoxal 5'-phosphate salvage; pyridoxal 5'-phosphate from pyridoxine 5'-phosphate: step 1/1. Catalyzes the oxidation of either pyridoxine 5'-phosphate (PNP) or pyridoxamine 5'-phosphate (PMP) into pyridoxal 5'-phosphate (PLP). The sequence is that of Pyridoxine/pyridoxamine 5'-phosphate oxidase from Hahella chejuensis (strain KCTC 2396).